Here is a 240-residue protein sequence, read N- to C-terminus: Orotidine 5'-phosphate decarboxylase (240 aa).

Substrate contacts are provided by residues aspartate 12, lysine 34, 62-71 (DMKLFDIGNT), threonine 117, arginine 180, glutamine 189, glycine 209, and arginine 210. The active-site Proton donor is the lysine 64.

It belongs to the OMP decarboxylase family. Type 1 subfamily. As to quaternary structure, homodimer.

The catalysed reaction is orotidine 5'-phosphate + H(+) = UMP + CO2. It functions in the pathway pyrimidine metabolism; UMP biosynthesis via de novo pathway; UMP from orotate: step 2/2. In terms of biological role, catalyzes the decarboxylation of orotidine 5'-monophosphate (OMP) to uridine 5'-monophosphate (UMP). This chain is Orotidine 5'-phosphate decarboxylase, found in Ruegeria pomeroyi (strain ATCC 700808 / DSM 15171 / DSS-3) (Silicibacter pomeroyi).